We begin with the raw amino-acid sequence, 117 residues long: Large ribosomal subunit protein bL20 (117 aa).

This sequence belongs to the bacterial ribosomal protein bL20 family.

Functionally, binds directly to 23S ribosomal RNA and is necessary for the in vitro assembly process of the 50S ribosomal subunit. It is not involved in the protein synthesizing functions of that subunit. The protein is Large ribosomal subunit protein bL20 of Rickettsia canadensis (strain McKiel).